The primary structure comprises 164 residues: GTP-dependent dephospho-CoA kinase (164 aa).

GTP contacts are provided by Asp40, Val41, Val42, Asp59, Lys61, and Glu113.

It belongs to the GTP-dependent DPCK family.

The catalysed reaction is 3'-dephospho-CoA + GTP = GDP + CoA + H(+). The protein operates within cofactor biosynthesis; coenzyme A biosynthesis. In terms of biological role, catalyzes the GTP-dependent phosphorylation of the 3'-hydroxyl group of dephosphocoenzyme A to form coenzyme A (CoA). This is GTP-dependent dephospho-CoA kinase from Sulfolobus acidocaldarius (strain ATCC 33909 / DSM 639 / JCM 8929 / NBRC 15157 / NCIMB 11770).